Here is a 464-residue protein sequence, read N- to C-terminus: Soluble pyridine nucleotide transhydrogenase (464 aa).

Residue 35 to 44 (DSRREVGGNC) participates in FAD binding.

Belongs to the class-I pyridine nucleotide-disulfide oxidoreductase family. Requires FAD as cofactor.

The protein localises to the cytoplasm. It catalyses the reaction NAD(+) + NADPH = NADH + NADP(+). In terms of biological role, conversion of NADPH, generated by peripheral catabolic pathways, to NADH, which can enter the respiratory chain for energy generation. The sequence is that of Soluble pyridine nucleotide transhydrogenase from Pseudomonas syringae pv. tomato (strain ATCC BAA-871 / DC3000).